The following is a 393-amino-acid chain: MLRRLLERPCTLALLVGSQLAVMMYLSLGGFRSLSALFGRDQGPTFDYSHPRDVYSNLSHLPGAPGGPPAPQGLPYCPERSPLLVGPVSVSFSPVPSLAEIVERNPRVEPGGRYRPAGCEPRSRTAIIVPHRAREHHLRLLLYHLHPFLQRQQLAYGIYVIHQAGNGTFNRAKLLNVGVREALRDEEWDCLFLHDVDLLPENDHNLYVCDPRGPRHVAVAMNKFGYSLPYPQYFGGVSALTPDQYLKMNGFPNEYWGWGGEDDDIATRVRLAGMKISRPPTSVGHYKMVKHRGDKGNEENPHRFDLLVRTQNSWTQDGMNSLTYQLLARELGPLYTNITADIGTDPRGPRAPSGPRYPPGSSQAFRQEMLQRRPPARPGPPPTANHTALRGSH.

Topologically, residues 1–10 are cytoplasmic; sequence MLRRLLERPC. A helical; Signal-anchor for type II membrane protein transmembrane segment spans residues 11 to 31; it reads TLALLVGSQLAVMMYLSLGGF. The Lumenal segment spans residues 32-393; it reads RSLSALFGRD…ANHTALRGSH (362 aa). N-linked (GlcNAc...) asparagine glycosylation occurs at Asn57. Cysteines 77 and 119 form a disulfide. 130 to 134 contributes to the UDP-alpha-D-galactose binding site; the sequence is PHRAR. The N-linked (GlcNAc...) asparagine glycan is linked to Asn166. UDP-alpha-D-galactose is bound by residues 169-171, 196-197, Tyr226, and Trp258; these read FNR and VD. A disulfide bond links Cys190 and Cys209. Asp197 lines the Mn(2+) pocket. 260 to 263 serves as a coordination point for N-acetyl-D-glucosamine; that stretch reads GEDD. Position 291 (His291) interacts with Mn(2+). Position 291–293 (291–293) interacts with UDP-alpha-D-galactose; the sequence is HRG. Residue Arg303 coordinates N-acetyl-D-glucosamine. N-linked (GlcNAc...) asparagine glycosylation is found at Asn337 and Asn385. A disordered region spans residues 339–393; the sequence is TADIGTDPRGPRAPSGPRYPPGSSQAFRQEMLQRRPPARPGPPPTANHTALRGSH.

It belongs to the glycosyltransferase 7 family. Mn(2+) serves as cofactor.

It localises to the golgi apparatus. It is found in the golgi stack membrane. It carries out the reaction an N-acetyl-beta-D-glucosaminyl derivative + UDP-alpha-D-galactose = a beta-D-galactosyl-(1-&gt;4)-N-acetyl-beta-D-glucosaminyl derivative + UDP + H(+). The enzyme catalyses N-acetyl-D-glucosamine + UDP-alpha-D-galactose = beta-D-galactosyl-(1-&gt;4)-N-acetyl-D-glucosamine + UDP + H(+). It catalyses the reaction a beta-D-GlcNAc-(1-&gt;3)-beta-D-Gal-(1-&gt;4)-beta-D-Glc-(1&lt;-&gt;1)-Cer(d18:1(4E)) + UDP-alpha-D-galactose = a neolactoside nLc4Cer(d18:1(4E)) + UDP + H(+). The catalysed reaction is a beta-D-glucosylceramide + UDP-alpha-D-galactose = a beta-D-galactosyl-(1-&gt;4)-beta-D-glucosyl-(1&lt;-&gt;1)-ceramide + UDP + H(+). It carries out the reaction a neolactoside IV(3)-beta-GlcNAc-nLc4Cer + UDP-alpha-D-galactose = a neolactoside nLc6Cer + UDP + H(+). It participates in protein modification; protein glycosylation. In terms of biological role, responsible for the synthesis of complex-type N-linked oligosaccharides in many glycoproteins as well as the carbohydrate moieties of glycolipids. This is Beta-1,4-galactosyltransferase 3 (B4GALT3) from Pongo abelii (Sumatran orangutan).